We begin with the raw amino-acid sequence, 90 residues long: U7-theraphotoxin-Hhn1b (90 aa).

An N-terminal signal peptide occupies residues 1–19; the sequence is MKTAIFTVVLALAVFAVLS. Residues 20-50 constitute a propeptide that is removed on maturation; the sequence is FGWEANEKALSEEFTELIHEKEAASETEARE. 3 disulfide bridges follow: C51–C65, C58–C70, and C64–C81.

This sequence belongs to the neurotoxin 10 (Hwtx-1) family. 13 (Hntx-13) subfamily. Expressed by the venom gland.

It is found in the secreted. In terms of biological role, ion channel inhibitor. This chain is U7-theraphotoxin-Hhn1b, found in Cyriopagopus hainanus (Chinese bird spider).